A 55-amino-acid polypeptide reads, in one-letter code: Large ribosomal subunit protein bL33 (55 aa).

It belongs to the bacterial ribosomal protein bL33 family.

The chain is Large ribosomal subunit protein bL33 from Erythrobacter litoralis (strain HTCC2594).